The following is a 190-amino-acid chain: UPF0149 protein NT01EI_3357 (190 aa).

It belongs to the UPF0149 family.

This is UPF0149 protein NT01EI_3357 from Edwardsiella ictaluri (strain 93-146).